The sequence spans 228 residues: 6-carboxyhexanoate--CoA ligase (228 aa).

The protein belongs to the BioW family. As to quaternary structure, homodimer. The cofactor is Mg(2+).

It catalyses the reaction heptanedioate + ATP + CoA = 6-carboxyhexanoyl-CoA + AMP + diphosphate. It participates in metabolic intermediate metabolism; pimeloyl-CoA biosynthesis; pimeloyl-CoA from pimelate: step 1/1. Its function is as follows. Catalyzes the transformation of pimelate into pimeloyl-CoA with concomitant hydrolysis of ATP to AMP. In Staphylococcus epidermidis (strain ATCC 12228 / FDA PCI 1200), this protein is 6-carboxyhexanoate--CoA ligase.